We begin with the raw amino-acid sequence, 505 residues long: Sodium/sialic acid symporter NanT (505 aa).

5 helical membrane passes run 9 to 29 (LNYI…VYFA), 45 to 65 (IPGW…ITFM), 80 to 100 (IGQY…IPFF), 128 to 148 (FMLF…LALM), and 155 to 175 (PLMI…LGGI). Ala-56 lines the Na(+) pocket. Thr-58 contacts N-acetyl-alpha-neuraminate. Leu-59 contributes to the Na(+) binding site. N-acetyl-alpha-neuraminate is bound by residues Ser-60, Thr-63, Gln-82, and Arg-135. Position 182 (Asp-182) interacts with Na(+). 4 consecutive transmembrane segments (helical) span residues 183–203 (VIQG…ICFN), 227–247 (FSWS…FFAS), 280–300 (LVAC…AYYT), and 318–338 (FYVI…AIFA). Residues Ala-339, Ser-342, Ser-343, Ser-345, and Ser-346 each coordinate Na(+). 4 helical membrane-spanning segments follow: residues 378–398 (TLTV…IMSN), 406–426 (FNSL…LGIF), 435–455 (ALLG…ATDL), and 457–477 (FFFY…LTAP).

The protein belongs to the sodium:solute symporter (SSF) (TC 2.A.21) family.

Its subcellular location is the cell inner membrane. It carries out the reaction N-acetyl-alpha-neuraminate(out) + 2 Na(+)(out) = N-acetyl-alpha-neuraminate(in) + 2 Na(+)(in). In terms of biological role, symporter that uses the Na(+) gradient as the driving force for the uptake of the sialic acid N-acetylneuraminic acid (Neu5Ac). Might play a role in persistence after colonization. This chain is Sodium/sialic acid symporter NanT, found in Aliivibrio fischeri (strain ATCC 700601 / ES114) (Vibrio fischeri).